The chain runs to 340 residues: Phosphoribosylformylglycinamidine cyclo-ligase (340 aa).

Belongs to the AIR synthase family.

The protein localises to the cytoplasm. It catalyses the reaction 2-formamido-N(1)-(5-O-phospho-beta-D-ribosyl)acetamidine + ATP = 5-amino-1-(5-phospho-beta-D-ribosyl)imidazole + ADP + phosphate + H(+). Its pathway is purine metabolism; IMP biosynthesis via de novo pathway; 5-amino-1-(5-phospho-D-ribosyl)imidazole from N(2)-formyl-N(1)-(5-phospho-D-ribosyl)glycinamide: step 2/2. The chain is Phosphoribosylformylglycinamidine cyclo-ligase from Streptococcus pyogenes serotype M2 (strain MGAS10270).